The primary structure comprises 74 residues: Putative Fe(2+) transport protein A (74 aa).

It belongs to the FeoA family.

In terms of biological role, might be involved in Fe(2+) ion uptake. The polypeptide is Putative Fe(2+) transport protein A (Campylobacter jejuni subsp. jejuni serotype O:2 (strain ATCC 700819 / NCTC 11168)).